A 591-amino-acid chain; its full sequence is V-type ATP synthase alpha chain (591 aa).

233 to 240 contributes to the ATP binding site; it reads GPFGAGKT.

The protein belongs to the ATPase alpha/beta chains family.

The enzyme catalyses ATP + H2O + 4 H(+)(in) = ADP + phosphate + 5 H(+)(out). Produces ATP from ADP in the presence of a proton gradient across the membrane. The V-type alpha chain is a catalytic subunit. This Streptococcus pyogenes serotype M18 (strain MGAS8232) protein is V-type ATP synthase alpha chain.